Here is a 909-residue protein sequence, read N- to C-terminus: UPF0182 protein Moth_1139 (909 aa).

The next 7 helical transmembrane spans lie at 8 to 28 (FCLL…SHFL), 51 to 71 (VGIR…NLLF), 103 to 123 (LGIL…PLAA), 165 to 185 (LLIT…FIFN), 201 to 221 (LVHF…GFRL), 245 to 265 (LLPG…IIVL), and 277 to 297 (AGIL…PLAV). Residues 843–862 (PAPAASPQPPSQAATGSPGN) form a disordered region.

Belongs to the UPF0182 family.

It localises to the cell membrane. This Moorella thermoacetica (strain ATCC 39073 / JCM 9320) protein is UPF0182 protein Moth_1139.